A 405-amino-acid chain; its full sequence is uncharacterized protein (405 aa).

13 consecutive transmembrane segments (helical) span residues 19-39 (IVSI…PLAV), 48-68 (MGFS…ATLL), 85-105 (IVVF…LADI), 106-126 (ASAW…ILGI), 129-149 (SFAG…LHIG), 156-176 (GIVT…CYAW), 178-198 (GLQG…LLAL), 224-244 (GMAL…ITLF), 252-272 (GAAF…LLFP), 283-303 (VAMI…TAAM), 309-329 (IGVL…GVVA), 344-364 (TYTV…GLVM), and 366-386 (WAGV…ALLL).

This sequence belongs to the major facilitator superfamily. YhhS family.

It is found in the cell inner membrane. This is an uncharacterized protein from Salmonella enteritidis PT4 (strain P125109).